Consider the following 612-residue polypeptide: MKRKLDENNVPTPENSGPKALEKTFETLHLDPRLLQALTKQKFTKPTLVQAEAIPLVLSGKDVLARAKTGSGKTAAYLLPILQSILQKKIANPTQKSISALILVPTRELAEQVQNAVVSFSSFCGKDIRSANLTQKVSDAVQRAILADLPDIIISTPARAIINTNSSSLSLNDLTHLVIDEADLVLSYGYEQDMQNLAKAIPRGVQTLLMSATLTSEVDALKGLFCRSPVILKLEEAEDEGAGIAQFAVKCAEDEKFLLTYVIFKLQLVKGKCIIFVGDIDRSYRLKLFLEQFGIKSCVLNSELPVNSRIHVVQEFNKGVYDIIIAADDQEVIGEIPKKGSKTPEQSNGENGDEPEEEKGFSDEDEVEPPPSKKRKKSTKEKDYGISRGIDFQDVACVLNFDLPTTAKSYTHRIGRTGRAGKTGMALSLIVPSELYGRHKPTSFPTAKNDEAVLAKIIKRQAKLGREVKPYNFDTKQIDAFRYRMTDALRAVTRVAVQEARTKEIKQELLNSEKLKRHFEENPEELRQLRHDGELRPTRVQAHLKHVPEYLMPAKGKAGLTSGDIGFVGLRKTNENRIRKARDRNRMRGKGGRKGGRGGGRKADPLKTFKSK.

Positions 23 to 51 (KTFETLHLDPRLLQALTKQKFTKPTLVQA) match the Q motif motif. The Helicase ATP-binding domain maps to 54-232 (IPLVLSGKDV…GLFCRSPVIL (179 aa)). An ATP-binding site is contributed by 67–74 (AKTGSGKT). The DEAD box motif lies at 180 to 183 (DEAD). In terms of domain architecture, Helicase C-terminal spans 243 to 479 (GIAQFAVKCA…PYNFDTKQID (237 aa)). 2 disordered regions span residues 335–383 (EIPK…KEKD) and 576–612 (NRIR…FKSK). The segment covering 351 to 368 (NGDEPEEEKGFSDEDEVE) has biased composition (acidic residues). The segment covering 579 to 600 (RKARDRNRMRGKGGRKGGRGGG) has biased composition (basic residues). The span at 601–612 (RKADPLKTFKSK) shows a compositional bias: basic and acidic residues.

The protein belongs to the DEAD box helicase family. DDX56/DBP9 subfamily.

Its subcellular location is the nucleus. It is found in the nucleolus. It catalyses the reaction ATP + H2O = ADP + phosphate + H(+). ATP-binding RNA helicase involved in the biogenesis of 60S ribosomal subunits and is required for the normal formation of 25S and 5.8S rRNAs. This chain is ATP-dependent RNA helicase DBP9 (DBP9), found in Coccidioides immitis (strain RS) (Valley fever fungus).